The sequence spans 663 residues: DNA topoisomerase 4 subunit B (663 aa).

ATP contacts are provided by residues tyrosine 7, asparagine 47, aspartate 74, 114-120 (GLHGVGA), and lysine 341. Positions 386–416 (REAARKAREDARSGKKNKRKDTLLSGKLTPA) are disordered. The span at 387–398 (EAARKAREDARS) shows a compositional bias: basic and acidic residues. Residues 424-538 (NELYLVEGDS…AGRVFIALPP (115 aa)) enclose the Toprim domain. Residues glutamate 430, aspartate 503, and aspartate 505 each coordinate Mg(2+).

Belongs to the type II topoisomerase family. ParE type 2 subfamily. As to quaternary structure, heterotetramer composed of ParC and ParE. Mg(2+) serves as cofactor. Mn(2+) is required as a cofactor. The cofactor is Ca(2+).

It catalyses the reaction ATP-dependent breakage, passage and rejoining of double-stranded DNA.. Its function is as follows. Topoisomerase IV is essential for chromosome segregation. It relaxes supercoiled DNA. Performs the decatenation events required during the replication of a circular DNA molecule. The chain is DNA topoisomerase 4 subunit B from Staphylococcus aureus (strain Mu50 / ATCC 700699).